A 949-amino-acid chain; its full sequence is Glycine dehydrogenase (decarboxylating) (949 aa).

An N6-(pyridoxal phosphate)lysine modification is found at K704.

It belongs to the GcvP family. As to quaternary structure, the glycine cleavage system is composed of four proteins: P, T, L and H. Pyridoxal 5'-phosphate serves as cofactor.

The enzyme catalyses N(6)-[(R)-lipoyl]-L-lysyl-[glycine-cleavage complex H protein] + glycine + H(+) = N(6)-[(R)-S(8)-aminomethyldihydrolipoyl]-L-lysyl-[glycine-cleavage complex H protein] + CO2. In terms of biological role, the glycine cleavage system catalyzes the degradation of glycine. The P protein binds the alpha-amino group of glycine through its pyridoxal phosphate cofactor; CO(2) is released and the remaining methylamine moiety is then transferred to the lipoamide cofactor of the H protein. In Bacteroides fragilis (strain YCH46), this protein is Glycine dehydrogenase (decarboxylating).